A 204-amino-acid polypeptide reads, in one-letter code: Ribosomal RNA small subunit methyltransferase G (204 aa).

Gly73, Phe78, and Arg139 together coordinate S-adenosyl-L-methionine.

Belongs to the methyltransferase superfamily. RNA methyltransferase RsmG family.

The protein localises to the cytoplasm. The catalysed reaction is guanosine(527) in 16S rRNA + S-adenosyl-L-methionine = N(7)-methylguanosine(527) in 16S rRNA + S-adenosyl-L-homocysteine. Its function is as follows. Specifically methylates the N7 position of guanine in position 527 of 16S rRNA. This is Ribosomal RNA small subunit methyltransferase G from Coxiella burnetii (strain RSA 331 / Henzerling II).